The primary structure comprises 295 residues: Iron-sulfur cluster carrier protein (295 aa).

38-45 contacts ATP; it reads GKGGVGKS.

Belongs to the Mrp/NBP35 ATP-binding proteins family. As to quaternary structure, homodimer.

Functionally, binds and transfers iron-sulfur (Fe-S) clusters to target apoproteins. Can hydrolyze ATP. The polypeptide is Iron-sulfur cluster carrier protein (Pyrococcus horikoshii (strain ATCC 700860 / DSM 12428 / JCM 9974 / NBRC 100139 / OT-3)).